We begin with the raw amino-acid sequence, 427 residues long: MPPIFQRLQQATKMSRRKILLLVLGCSTLSLLIHQGAQLSWYPKLFPLSCPPLQDSPPRPKHMTVAFLKTHKTAGTTVQNILFRFAERHNLTVALPHPSCEHQFCYPRNFSAHFVHPATRPPHVLASHLRFDRAELQRLMPPGTVYVTILREPAAMFESLFSYYNQYCPAFRRVPNASLEAFLRAPEAYYRAGEHFAMFAHNTLAYDLGGDNERSPRDDDAYLAGLIRQVEEVFSLVMIAEYFDESLVLLRRLLAWDLDDVLYARLNARAASSRLAAIPAALAQAARAWNALDAGLYDHFNATFWRRVASAGRACVEREARELREARERLLRRCFGDEPVLRPAAQIRTKQLQPWQPSRKVDIMGYDLPSGRAGPATEACLKLAMPEVQYSSYLLRKQKRRGGMRLRPEPVLDNPPPRPIRALRPGH.

Residues 1 to 19 (MPPIFQRLQQATKMSRRKI) lie on the Cytoplasmic side of the membrane. The chain crosses the membrane as a helical; Signal-anchor for type II membrane protein span at residues 20-40 (LLLVLGCSTLSLLIHQGAQLS). The Lumenal portion of the chain corresponds to 41-427 (WYPKLFPLSC…RPIRALRPGH (387 aa)). Residues Asn-90, Asn-109, Asn-176, and Asn-301 are each glycosylated (N-linked (GlcNAc...) asparagine). Positions 404–427 (MRLRPEPVLDNPPPRPIRALRPGH) are disordered.

Belongs to the galactose-3-O-sulfotransferase family. The cofactor is Mg(2+).

The protein localises to the golgi apparatus. Its subcellular location is the golgi stack membrane. Its pathway is protein modification; carbohydrate sulfation. Transfers a sulfate to position 3 of non-reducing beta-galactosyl residues in N-glycans and core2-branched O-glycans. Has high activity towards Gal-beta-1,4-GlcNAc, Gal-beta-1,4(Fuc-alpha-1,3)GlcNAc and lower activity towards Gal-beta-1,3(Fuc-alpha-1,4)GlcNAc. The protein is Galactose-3-O-sulfotransferase 3 (GAL3ST3) of Bos taurus (Bovine).